Reading from the N-terminus, the 273-residue chain is Phosphate import ATP-binding protein PstB (273 aa).

The ABC transporter domain maps to 27-268 (VTVRDLNFYY…PSDRRTQDYI (242 aa)). Residue 59-66 (GPSGCGKS) participates in ATP binding.

This sequence belongs to the ABC transporter superfamily. Phosphate importer (TC 3.A.1.7) family. The complex is composed of two ATP-binding proteins (PstB), two transmembrane proteins (PstC and PstA) and a solute-binding protein (PstS).

It is found in the cell inner membrane. The enzyme catalyses phosphate(out) + ATP + H2O = ADP + 2 phosphate(in) + H(+). Its function is as follows. Part of the ABC transporter complex PstSACB involved in phosphate import. Responsible for energy coupling to the transport system. This chain is Phosphate import ATP-binding protein PstB, found in Rhodopseudomonas palustris (strain ATCC BAA-98 / CGA009).